Reading from the N-terminus, the 324-residue chain is NAC domain-containing protein 21/22 (324 aa).

Residues L19 to K171 form the NAC domain. The Bipartite nuclear localization signal motif lies at R120–D137.

As to quaternary structure, dimer. Interacts with SINAT5. Ubiquitinated. The interaction with SINAT5 mediate its proteasome-dependent degradation. As to expression, predominantly expressed in the root tip and in lateral root initiation sites. Also detected in expanding cotyledon, and in leaf primordia.

Its subcellular location is the nucleus. Transcriptional activator that mediates auxin signaling to promote lateral root development. Activates the expression of two downstream auxin-responsive genes, DBP and AIR3. This Arabidopsis thaliana (Mouse-ear cress) protein is NAC domain-containing protein 21/22 (NAC021).